The chain runs to 122 residues: Large ribosomal subunit protein uL14 (122 aa).

The protein belongs to the universal ribosomal protein uL14 family. In terms of assembly, part of the 50S ribosomal subunit. Forms a cluster with proteins L3 and L19. In the 70S ribosome, L14 and L19 interact and together make contacts with the 16S rRNA in bridges B5 and B8.

Functionally, binds to 23S rRNA. Forms part of two intersubunit bridges in the 70S ribosome. This chain is Large ribosomal subunit protein uL14, found in Methylobacterium radiotolerans (strain ATCC 27329 / DSM 1819 / JCM 2831 / NBRC 15690 / NCIMB 10815 / 0-1).